A 244-amino-acid chain; its full sequence is Putative quercetin 2,3-dioxygenase Mb0187c (244 aa).

A divalent metal cation contacts are provided by histidine 60, histidine 62, histidine 104, and glutamate 106.

It belongs to the pirin family. The cofactor is a divalent metal cation.

It catalyses the reaction quercetin + O2 = 2-(3,4-dihydroxybenzoyloxy)-4,6-dihydroxybenzoate + CO. It participates in flavonoid metabolism; quercetin degradation. Functionally, putative quercetin 2,3-dioxygenase. In Mycobacterium bovis (strain ATCC BAA-935 / AF2122/97), this protein is Putative quercetin 2,3-dioxygenase Mb0187c.